The primary structure comprises 133 residues: Small ribosomal subunit protein eS8 (133 aa).

Residues 1–22 (MGFYQGPDNRKITGGLKGKHRD) are disordered.

It belongs to the eukaryotic ribosomal protein eS8 family. As to quaternary structure, part of the 30S ribosomal subunit.

The polypeptide is Small ribosomal subunit protein eS8 (Saccharolobus islandicus (strain Y.N.15.51 / Yellowstone #2) (Sulfolobus islandicus)).